The following is a 121-amino-acid chain: Ribosome-binding factor A (121 aa).

The protein belongs to the RbfA family. In terms of assembly, monomer. Binds 30S ribosomal subunits, but not 50S ribosomal subunits or 70S ribosomes.

It localises to the cytoplasm. Functionally, one of several proteins that assist in the late maturation steps of the functional core of the 30S ribosomal subunit. Associates with free 30S ribosomal subunits (but not with 30S subunits that are part of 70S ribosomes or polysomes). Required for efficient processing of 16S rRNA. May interact with the 5'-terminal helix region of 16S rRNA. In Clostridium novyi (strain NT), this protein is Ribosome-binding factor A.